The primary structure comprises 333 residues: DNA repair and recombination protein RadA (333 aa).

ATP is bound at residue 127-134; it reads GEFGSGKT.

This sequence belongs to the eukaryotic RecA-like protein family.

In terms of biological role, involved in DNA repair and in homologous recombination. Binds and assemble on single-stranded DNA to form a nucleoprotein filament. Hydrolyzes ATP in a ssDNA-dependent manner and promotes DNA strand exchange between homologous DNA molecules. The protein is DNA repair and recombination protein RadA of Pyrobaculum arsenaticum (strain DSM 13514 / JCM 11321 / PZ6).